Consider the following 389-residue polypeptide: Cytochrome b (389 aa).

The next 8 helical transmembrane spans lie at 32 to 52 (FGFF…LLAM), 76 to 98 (WLLR…IHML), 113 to 133 (LWVS…LGYV), 179 to 199 (FFSL…LHII), 225 to 245 (FTIK…TFVF), 290 to 310 (LGVL…FLTI), 325 to 345 (LFWS…QPAA), and 353 to 373 (LYST…IYIV). Heme b contacts are provided by His82 and His96. Positions 183 and 197 each coordinate heme b.

Belongs to the cytochrome b family. The main subunits of complex b-c1 are: cytochrome b, cytochrome c1 and the Rieske protein. Heme b is required as a cofactor.

Its subcellular location is the mitochondrion inner membrane. Functionally, component of the ubiquinol-cytochrome c reductase complex (complex III or cytochrome b-c1 complex) that is part of the mitochondrial respiratory chain. The b-c1 complex mediates electron transfer from ubiquinol to cytochrome c. Contributes to the generation of a proton gradient across the mitochondrial membrane that is then used for ATP synthesis. This is Cytochrome b (cytB) from Dictyostelium discoideum (Social amoeba).